The primary structure comprises 363 residues: MSMDVTFLGTGAAYPSPTRGASAVVLRCEGECWLFDCGEGTQTQLMKSQLKAGRITKIFITHLHGDHFFGLPGLLCTISLQSGSMVSKQPIEIYGPVGLRDFIWRTMELSHTELVFHYVVHELVPTADQCPAEELKEFAHVNRADSPPKEEQGRTILLDSEENSYLLFDDEQFVVKAFRLFHRIPSFGFSVVEKKRPGKLNAQKLKDLGVPPGPAYGKLKNGISVVLENGVTISPQDVLKKPIVGRKICILGDCSGVVGDGGVKLCFEADLLIHEATLDDAQMDKAKEHGHSTPQMAATFAKLCRAKRLVLTHFSQRYKPVALAREGETDGIAELKKQAESVLDLQEVTLAEDFMVISIPIKK.

Residues His-62, His-64, Asp-66, His-67, His-182, Asp-253, and His-313 each contribute to the Zn(2+) site. Asp-66 functions as the Proton acceptor in the catalytic mechanism.

The protein belongs to the RNase Z family. As to quaternary structure, homodimer. Zn(2+) serves as cofactor. As to expression, widely expressed. Expressed in heart, brain, placenta, lung, liver, skeletal muscle, kidney and pancreas.

The protein localises to the cytoplasm. The protein resides in the cytosol. Its subcellular location is the nucleus. It catalyses the reaction Endonucleolytic cleavage of RNA, removing extra 3' nucleotides from tRNA precursor, generating 3' termini of tRNAs. A 3'-hydroxy group is left at the tRNA terminus and a 5'-phosphoryl group is left at the trailer molecule.. Functionally, zinc phosphodiesterase, which displays some tRNA 3'-processing endonuclease activity. Specifically involved in tRNA repair: acts downstream of the ribosome-associated quality control (RQC) pathway by removing a 2',3'-cyclic phosphate from tRNAs following cleavage by ANKZF1. tRNAs are then processed by TRNT1. This is Zinc phosphodiesterase ELAC protein 1 from Homo sapiens (Human).